Consider the following 635-residue polypeptide: MSGARSTTAGAVPSAATTSTTSTTSNSKDSDSNESLYPLALLMDELKHDDIANRVEAMKKLDTIALALGPERTRNELIPFLTEVAQDDEDEVFAVLAEQLGKFVPYIGGPQYATILLPVLEILASAEETLVREKAVDSLNNVAQELSQEQLFSDFVPLIEHLATADWFSSKVSACGLFKSVIVRIKDDSLRKNILALYLQLAQDDTPMVKRAVGKNLPILIDLLTQNLGLSTDEDWDYISNIFQKIINDNQDSVKFLAVDCLISILKFFNAKGDESHTQDLLNSAVKLIGDEAWRVRYMAADRFSDLASQFSSNQAYIDELVQPFLNLCEDNEGDVREAVAKQVSGFAKFLNDPSIILNKILPAVQNLSMDESETVRSALASKITNIVLLLNKDQVINNFLPILLNMLRDEFPDVRLNIIASLKVVNDVIGIELLSDSLLPAITELAKDVNWRVRMAIIEYIPILAEQLGMQFFDQQLSDLCLSWLWDTVYSIREAAVNNLKRLTEIFGSDWCRDEIISRLLKFDLQLLENFVSRFTILSALTTLVPVVSLDVVTEQLLPFISHLADDGVPNIRFNVAKSYAVIVKVLIKDEAKYDALIKNTILPSLQTLCQDEDVDVKYFAKKSLAECQELLKN.

The span at 1 to 27 (MSGARSTTAGAVPSAATTSTTSTTSNS) shows a compositional bias: low complexity. The disordered stretch occupies residues 1 to 33 (MSGARSTTAGAVPSAATTSTTSTTSNSKDSDSN). 15 HEAT repeats span residues 34 to 72 (ESLY…GPER), 73 to 111 (TRNE…GGPQ), 112 to 150 (YATI…SQEQ), 151 to 189 (LFSD…KDDS), 190 to 228 (LRKN…TQNL), 229 to 273 (GLST…NAKG), 274 to 316 (DESH…SNQA), 317 to 356 (YIDE…DPSI), 357 to 395 (ILNK…NKDQ), 396 to 434 (VINN…GIEL), 435 to 473 (LSDS…GMQF), 474 to 512 (FDQQ…GSDW), 513 to 553 (CRDE…SLDV), 554 to 598 (VTEQ…YDAL), and 599 to 632 (IKNT…CQEL).

Belongs to the phosphatase 2A regulatory subunit A family. PP2A exists in several trimeric forms, all of which consist of a core composed of a catalytic subunit associated with a 65 kDa regulatory subunit (PR65) (subunit A). The core complex associates with a third, variable subunit (subunit B), which confers distinct properties to the holoenzyme.

Its function is as follows. Phosphatase 2A affects a variety of biological processes in the cell such as transcription, cell cycle progression and cellular morphogenesis, and provides an initial identification of critical substrates for this phosphatase. The regulatory subunit may direct the catalytic subunit to distinct, albeit overlapping, subsets of substrates. This is Protein phosphatase PP2A regulatory subunit A (TPD3) from Saccharomyces cerevisiae (strain ATCC 204508 / S288c) (Baker's yeast).